A 188-amino-acid chain; its full sequence is Molybdopterin synthase catalytic subunit (188 aa).

Residues 1 to 14 (MATQPPQDQTSTTP) show a composition bias toward low complexity. Residues 1–23 (MATQPPQDQTSTTPSLPPHLDPT) form a disordered region. Substrate is bound by residues 134–135 (HR), Lys-150, and 157–159 (KRE).

It belongs to the MoaE family. MOCS2B subfamily. In terms of assembly, heterotetramer; composed of 2 small (MOCS2A) and 2 large (MOCS2B) subunits.

The protein localises to the cytoplasm. The catalysed reaction is 2 [molybdopterin-synthase sulfur-carrier protein]-C-terminal-Gly-aminoethanethioate + cyclic pyranopterin phosphate + H2O = molybdopterin + 2 [molybdopterin-synthase sulfur-carrier protein]-C-terminal Gly-Gly + 2 H(+). It participates in cofactor biosynthesis; molybdopterin biosynthesis. Catalytic subunit of the molybdopterin synthase complex, a complex that catalyzes the conversion of precursor Z into molybdopterin. Acts by mediating the incorporation of 2 sulfur atoms from thiocarboxylated MOCS2A into precursor Z to generate a dithiolene group. This is Molybdopterin synthase catalytic subunit from Aspergillus fumigatus (strain ATCC MYA-4609 / CBS 101355 / FGSC A1100 / Af293) (Neosartorya fumigata).